A 348-amino-acid chain; its full sequence is Sulfate/thiosulfate import ATP-binding protein CysA (348 aa).

The ABC transporter domain maps to 3 to 237 (IRIQELCKQF…PSSPFVYSFV (235 aa)). 35–42 (GPSGSGKT) lines the ATP pocket.

This sequence belongs to the ABC transporter superfamily. Sulfate/tungstate importer (TC 3.A.1.6) family. As to quaternary structure, the complex is composed of two ATP-binding proteins (CysA), two transmembrane proteins (CysT and CysW) and a solute-binding protein (CysP).

The protein resides in the cell inner membrane. The catalysed reaction is sulfate(out) + ATP + H2O = sulfate(in) + ADP + phosphate + H(+). The enzyme catalyses thiosulfate(out) + ATP + H2O = thiosulfate(in) + ADP + phosphate + H(+). Its function is as follows. Part of the ABC transporter complex CysAWTP involved in sulfate/thiosulfate import. Responsible for energy coupling to the transport system. In Xylella fastidiosa (strain 9a5c), this protein is Sulfate/thiosulfate import ATP-binding protein CysA.